The following is a 263-amino-acid chain: tRNA pseudouridine synthase A (263 aa).

D51 functions as the Nucleophile in the catalytic mechanism. Y109 is a substrate binding site.

Belongs to the tRNA pseudouridine synthase TruA family. Homodimer.

The enzyme catalyses uridine(38/39/40) in tRNA = pseudouridine(38/39/40) in tRNA. In terms of biological role, formation of pseudouridine at positions 38, 39 and 40 in the anticodon stem and loop of transfer RNAs. The sequence is that of tRNA pseudouridine synthase A from Mannheimia succiniciproducens (strain KCTC 0769BP / MBEL55E).